Reading from the N-terminus, the 219-residue chain is Uracil-DNA glycosylase (219 aa).

Asp64 functions as the Proton acceptor in the catalytic mechanism.

The protein belongs to the uracil-DNA glycosylase (UDG) superfamily. UNG family.

It is found in the cytoplasm. The catalysed reaction is Hydrolyzes single-stranded DNA or mismatched double-stranded DNA and polynucleotides, releasing free uracil.. Excises uracil residues from the DNA which can arise as a result of misincorporation of dUMP residues by DNA polymerase or due to deamination of cytosine. This is Uracil-DNA glycosylase from Leuconostoc citreum (strain KM20).